Reading from the N-terminus, the 298-residue chain is Thymidylate synthase (298 aa).

Residues Arg25 and 159 to 160 (RR) each bind dUMP. Cys179 acts as the Nucleophile in catalysis. Residues 200 to 203 (RSVD), Asn211, and 241 to 243 (HLY) contribute to the dUMP site. Asp203 lines the (6R)-5,10-methylene-5,6,7,8-tetrahydrofolate pocket. Ala297 contributes to the (6R)-5,10-methylene-5,6,7,8-tetrahydrofolate binding site.

The protein belongs to the thymidylate synthase family. Bacterial-type ThyA subfamily. As to quaternary structure, homodimer.

Its subcellular location is the cytoplasm. It carries out the reaction dUMP + (6R)-5,10-methylene-5,6,7,8-tetrahydrofolate = 7,8-dihydrofolate + dTMP. It participates in pyrimidine metabolism; dTTP biosynthesis. Its function is as follows. Catalyzes the reductive methylation of 2'-deoxyuridine-5'-monophosphate (dUMP) to 2'-deoxythymidine-5'-monophosphate (dTMP) while utilizing 5,10-methylenetetrahydrofolate (mTHF) as the methyl donor and reductant in the reaction, yielding dihydrofolate (DHF) as a by-product. This enzymatic reaction provides an intracellular de novo source of dTMP, an essential precursor for DNA biosynthesis. The chain is Thymidylate synthase from Cereibacter sphaeroides (strain ATCC 17029 / ATH 2.4.9) (Rhodobacter sphaeroides).